A 386-amino-acid polypeptide reads, in one-letter code: Patatin (386 aa).

Residues 1–23 (MATTKSFLILFFMILATTSSTCA) form the signal peptide. Positions 32–229 (LSIDGGGIKG…TVGDPALLSL (198 aa)) constitute a PNPLA domain. A GXGXXG motif is present at residues 36-41 (GGGIKG). A GXSXG motif is present at residues 75–79 (GTSTG). The active-site Nucleophile is the serine 77. N-linked (GlcNAc...) asparagine glycosylation is present at asparagine 115. Residue aspartate 215 is the Proton acceptor of the active site. The short motif at 215 to 217 (DGA) is the DGA/G element.

The protein belongs to the patatin family.

The protein localises to the vacuole. Its function is as follows. Probable lipolytic acyl hydrolase (LAH), an activity which is thought to be involved in the response of tubers to pathogens. This chain is Patatin, found in Solanum tuberosum (Potato).